The primary structure comprises 424 residues: MASSNLIKQLQERGLVAQVTDEDALAERLAQGPIALYCGFDPTADSLHLGHLVPLLCLKRFQQAGHKPVALVGGATGLIGDPSFKAAERKLNTEETVQEWVAKIRKQVAPFLDFDCGENSAIAANNYDWFGSMNVLTFLRDIGKHFSVNQMINKEAVKQRLNRDDQGISFTEFSYNLLQGYDFACLNKLHGVALQIGGSDQWGNITSGIDLTRRLHQNQVFGLTVPLITKADGTKFGKTEGGAVWLDPKKTSPYKFYQFWINTADADVYRFLKFFTFMDIEEINALEEEDKNSGKAPRAQYVLAEQVTRLVHGEEGLVAAKRITECLFSGSLSALSEADFEQLAQDGVPMVEMEKGADLMQALVDAELQPSRGQARKTIASNAVTINGEKQSDPEYIFNDEDRLFGRYTLLRRGKKNYCLICWK.

Tyr37 contributes to the L-tyrosine binding site. Residues 42–51 (PTADSLHLGH) carry the 'HIGH' region motif. L-tyrosine contacts are provided by Tyr175 and Gln179. The 'KMSKS' region signature appears at 235 to 239 (KFGKT). ATP is bound at residue Lys238. The S4 RNA-binding domain occupies 357–414 (ADLMQALVDAELQPSRGQARKTIASNAVTINGEKQSDPEYIFNDEDRLFGRYTLLRRG).

It belongs to the class-I aminoacyl-tRNA synthetase family. TyrS type 1 subfamily. In terms of assembly, homodimer.

The protein resides in the cytoplasm. It catalyses the reaction tRNA(Tyr) + L-tyrosine + ATP = L-tyrosyl-tRNA(Tyr) + AMP + diphosphate + H(+). Functionally, catalyzes the attachment of tyrosine to tRNA(Tyr) in a two-step reaction: tyrosine is first activated by ATP to form Tyr-AMP and then transferred to the acceptor end of tRNA(Tyr). The polypeptide is Tyrosine--tRNA ligase (Salmonella agona (strain SL483)).